The primary structure comprises 192 residues: Interleukin-18 (192 aa).

The propeptide occupies 1–35 (MAAEPVEDNCISFVEMKFINNTLYFVAENGDLESD).

It belongs to the IL-1 family. In terms of assembly, forms a ternary complex with ligand-binding receptor subunit IL18R1 and signaling receptor subunit IL18RAP at the plasma membrane. Mature IL18 first binds to IL18R1 forming a low affinity binary complex, which then interacts with IL18RAP to form a high affinity ternary complex that signals inside the cell. Interacts with cargo receptor TMED10; the interaction mediates the translocation from the cytoplasm into the ERGIC (endoplasmic reticulum-Golgi intermediate compartment) and thereby secretion. Post-translationally, the pro-IL-18 precursor is processed by CASP1, CASP4 or CASP5 to yield its mature, active form. The pro-IL-18 precursor features autoinhibitory interactions between the propeptide and the post-cleavage-site region, preventing recognition by the IL18R1 receptor. Processing by CASP1, CASP4 or CASP5 induces conformational changes to generate critical receptor-binding sites. The mature form is then secreted and released in the extracellular milieu by passing through the gasdermin-D (GSDMD) pore. In contrast, cleavage by CASP3 inactivates IL18.

It is found in the cytoplasm. Its subcellular location is the cytosol. The protein localises to the secreted. Functionally, pro-inflammatory cytokine primarily involved in epithelial barrier repair, polarized T-helper 1 (Th1) cell and natural killer (NK) cell immune responses. Upon binding to IL18R1 and IL18RAP, forms a signaling ternary complex which activates NF-kappa-B, triggering synthesis of inflammatory mediators. Synergizes with IL12/interleukin-12 to induce IFNG synthesis from T-helper 1 (Th1) cells and natural killer (NK) cells. Involved in transduction of inflammation downstream of pyroptosis: its mature form is specifically released in the extracellular milieu by passing through the gasdermin-D (GSDMD) pore. The chain is Interleukin-18 (IL18) from Capra hircus (Goat).